Consider the following 306-residue polypeptide: Tyrosine recombinase XerD (306 aa).

The region spanning 1–83 is the Core-binding (CB) domain; the sequence is MGFIAQFLEM…TIKSYYEFLI (83 aa). The 196-residue stretch at 104–299 folds into the Tyr recombinase domain; it reads KLPEILSIAQ…QTNHLKKALL (196 aa). Catalysis depends on residues Arg145, Lys176, His251, Arg254, and His277. Tyr286 serves as the catalytic O-(3'-phospho-DNA)-tyrosine intermediate.

Belongs to the 'phage' integrase family. XerD subfamily. In terms of assembly, forms a cyclic heterotetrameric complex composed of two molecules of XerC and two molecules of XerD.

Its subcellular location is the cytoplasm. In terms of biological role, site-specific tyrosine recombinase, which acts by catalyzing the cutting and rejoining of the recombining DNA molecules. The XerC-XerD complex is essential to convert dimers of the bacterial chromosome into monomers to permit their segregation at cell division. It also contributes to the segregational stability of plasmids. The protein is Tyrosine recombinase XerD of Rickettsia conorii (strain ATCC VR-613 / Malish 7).